We begin with the raw amino-acid sequence, 107 residues long: Toluene 1,2-dioxygenase system ferredoxin subunit (107 aa).

One can recognise a Rieske domain in the interval threonine 4–valine 99. [2Fe-2S] cluster contacts are provided by cysteine 43, histidine 45, cysteine 62, and histidine 65.

Belongs to the bacterial ring-hydroxylating dioxygenase ferredoxin component family. In terms of assembly, this dioxygenase system consists of four proteins: the two subunits of the hydroxylase component (todC1 and todC2), a ferredoxin (TodB) and a ferredoxin reductase (TodA).

It functions in the pathway xenobiotic degradation; toluene degradation. This protein seems to be a 2Fe-2S ferredoxin. This chain is Toluene 1,2-dioxygenase system ferredoxin subunit (todB), found in Pseudomonas putida (strain ATCC 700007 / DSM 6899 / JCM 31910 / BCRC 17059 / LMG 24140 / F1).